The primary structure comprises 391 residues: Chorismate synthase (391 aa).

R48 contributes to the NADP(+) binding site. FMN contacts are provided by residues 126-128 (RAS), G286, 301-305 (KPTSS), and R328.

It belongs to the chorismate synthase family. The cofactor is FMNH2.

It carries out the reaction 5-O-(1-carboxyvinyl)-3-phosphoshikimate = chorismate + phosphate. The protein operates within metabolic intermediate biosynthesis; chorismate biosynthesis; chorismate from D-erythrose 4-phosphate and phosphoenolpyruvate: step 7/7. Its function is as follows. Catalyzes the anti-1,4-elimination of the C-3 phosphate and the C-6 proR hydrogen from 5-enolpyruvylshikimate-3-phosphate (EPSP) to yield chorismate, which is the branch point compound that serves as the starting substrate for the three terminal pathways of aromatic amino acid biosynthesis. This reaction introduces a second double bond into the aromatic ring system. The polypeptide is Chorismate synthase (Saccharolobus islandicus (strain Y.N.15.51 / Yellowstone #2) (Sulfolobus islandicus)).